The primary structure comprises 145 residues: Small ribosomal subunit protein uS9 (145 aa).

The span at 1–13 shows a compositional bias: polar residues; that stretch reads MATDQHSNKSNVS. A disordered region spans residues 1-24; it reads MATDQHSNKSNVSAARKPLSPSPT.

The protein belongs to the universal ribosomal protein uS9 family.

It localises to the cytoplasm. This is Small ribosomal subunit protein uS9 (RPS16) from Lupinus polyphyllus (Large-leaved lupine).